Consider the following 444-residue polypeptide: ATP-dependent protease ATPase subunit HslU (444 aa).

Residues Ile18 and 60–65 (GVGKTE) each bind ATP. A disordered region spans residues 141-161 (DAWGNNEEGDNDSGTRQSFRK). Residues Asp257, Glu322, and Arg394 each coordinate ATP.

This sequence belongs to the ClpX chaperone family. HslU subfamily. As to quaternary structure, a double ring-shaped homohexamer of HslV is capped on each side by a ring-shaped HslU homohexamer. The assembly of the HslU/HslV complex is dependent on binding of ATP.

The protein localises to the cytoplasm. In terms of biological role, ATPase subunit of a proteasome-like degradation complex; this subunit has chaperone activity. The binding of ATP and its subsequent hydrolysis by HslU are essential for unfolding of protein substrates subsequently hydrolyzed by HslV. HslU recognizes the N-terminal part of its protein substrates and unfolds these before they are guided to HslV for hydrolysis. This is ATP-dependent protease ATPase subunit HslU from Aliivibrio fischeri (strain MJ11) (Vibrio fischeri).